The sequence spans 606 residues: Ectonucleoside triphosphate diphosphohydrolase 7 (606 aa).

Residues 1–28 (MARISFSYLCPASWYFTVPTVSPFLRQR) lie on the Cytoplasmic side of the membrane. The helical transmembrane segment at 29 to 49 (VAFLGLFFIPCVLLLLLIMDL) threads the bilayer. At 50–548 (RHWATSLPRD…PAHGSWLRLS (499 aa)) the chain is on the vesicular side. The Proton acceptor role is filled by Glu-217. An N-linked (GlcNAc...) asparagine glycan is attached at Asn-330. Cysteines 448 and 477 form a disulfide. Residues 549–569 (FVYNHYLFFACTLVVLLAIVL) traverse the membrane as a helical segment. The Cytoplasmic segment spans residues 570–606 (YLLRIHRIHRRQTRASAPLDLLWIEQVVPMIGVQVGP).

It belongs to the GDA1/CD39 NTPase family. Requires Ca(2+) as cofactor. Mg(2+) serves as cofactor. As to expression, widely expressed. Expressed at high level in brain, kidney, liver, testis and small intestin. Weakly expressed in lung, thymus and heart.

It localises to the cytoplasmic vesicle membrane. The enzyme catalyses a ribonucleoside 5'-triphosphate + H2O = a ribonucleoside 5'-diphosphate + phosphate + H(+). It catalyses the reaction UTP + H2O = UDP + phosphate + H(+). The catalysed reaction is GTP + H2O = GDP + phosphate + H(+). It carries out the reaction CTP + H2O = CDP + phosphate + H(+). The enzyme catalyses ATP + H2O = ADP + phosphate + H(+). Catalyzes the hydrolysis of nucleoside triphosphates and diphosphates in a calcium- or magnesium-dependent manner. Preferentially hydrolyzes nucleoside 5'-triphosphates, with substrate preference for UTP &gt; GTP &gt; CTP. Hydrolyzes nucleoside diphosphates only to a minor extent. In contrast to its human ortholog is able to hydrolyze ATP. In the epithelial cells of small intestine controls luminal ATP levels, therefore regulating Th17-cell development. This is Ectonucleoside triphosphate diphosphohydrolase 7 (Entpd7) from Mus musculus (Mouse).